The sequence spans 503 residues: uncharacterized protein (503 aa).

The stretch at 437-465 (LNKDLILENLIETENENDKQEFQKLLRTI) forms a coiled coil.

Belongs to the IIV-6 467R family.

This is an uncharacterized protein from Invertebrate iridescent virus 6 (IIV-6).